The sequence spans 199 residues: Imidazole glycerol phosphate synthase subunit HisH (199 aa).

A Glutamine amidotransferase type-1 domain is found at 2 to 199 (RAVIIDYGVG…LTNVYRWLRK (198 aa)). The active-site Nucleophile is Cys-76. Active-site residues include His-178 and Glu-180.

Heterodimer of HisH and HisF.

The protein resides in the cytoplasm. The enzyme catalyses 5-[(5-phospho-1-deoxy-D-ribulos-1-ylimino)methylamino]-1-(5-phospho-beta-D-ribosyl)imidazole-4-carboxamide + L-glutamine = D-erythro-1-(imidazol-4-yl)glycerol 3-phosphate + 5-amino-1-(5-phospho-beta-D-ribosyl)imidazole-4-carboxamide + L-glutamate + H(+). It carries out the reaction L-glutamine + H2O = L-glutamate + NH4(+). The protein operates within amino-acid biosynthesis; L-histidine biosynthesis; L-histidine from 5-phospho-alpha-D-ribose 1-diphosphate: step 5/9. IGPS catalyzes the conversion of PRFAR and glutamine to IGP, AICAR and glutamate. The HisH subunit catalyzes the hydrolysis of glutamine to glutamate and ammonia as part of the synthesis of IGP and AICAR. The resulting ammonia molecule is channeled to the active site of HisF. The chain is Imidazole glycerol phosphate synthase subunit HisH from Sulfolobus acidocaldarius (strain ATCC 33909 / DSM 639 / JCM 8929 / NBRC 15157 / NCIMB 11770).